Here is a 450-residue protein sequence, read N- to C-terminus: ATP-dependent protease ATPase subunit HslU (450 aa).

ATP is bound by residues Val-29, 71-76 (GVGKTE), Asp-261, Glu-328, and Arg-400.

Belongs to the ClpX chaperone family. HslU subfamily. As to quaternary structure, a double ring-shaped homohexamer of HslV is capped on each side by a ring-shaped HslU homohexamer. The assembly of the HslU/HslV complex is dependent on binding of ATP.

The protein localises to the cytoplasm. Functionally, ATPase subunit of a proteasome-like degradation complex; this subunit has chaperone activity. The binding of ATP and its subsequent hydrolysis by HslU are essential for unfolding of protein substrates subsequently hydrolyzed by HslV. HslU recognizes the N-terminal part of its protein substrates and unfolds these before they are guided to HslV for hydrolysis. The protein is ATP-dependent protease ATPase subunit HslU of Rickettsia prowazekii (strain Madrid E).